A 1077-amino-acid polypeptide reads, in one-letter code: Histone deacetylase 4 (1077 aa).

Residues 66–169 (REQQLQQELL…GKESAVASTE (104 aa)) adopt a coiled-coil conformation. The segment at 117–312 (MLAMKHQQEL…NSSSGNVSTE (196 aa)) is interaction with MEF2A. Basic and acidic residues predominate over residues 132 to 162 (KLERHRQEQELEKQHREQKLQQLKNKEKGKE). Disordered stretches follow at residues 132-167 (KLERHRQEQELEKQHREQKLQQLKNKEKGKESAVAS), 204-225 (KTQHSSLDQSSPPQSGVSASYN), and 239-327 (PLRK…AETS). Residues 205–224 (TQHSSLDQSSPPQSGVSASY) show a composition bias toward polar residues. Ser-209 carries the post-translational modification Phosphoserine. A Phosphoserine; by CaMK4 and SIK1 modification is found at Ser-245. Residues 258–273 (KVAERRSSPLLRRKDG) show a composition bias toward basic and acidic residues. Residues 289–310 (SACSSAPGSGPSSPNSSSGNVS) are compositionally biased toward low complexity. The short motif at 348 to 353 (PSLPNI) is the PxLPxI/L motif; mediates interaction with ANKRA2 and 14-3-3 proteins element. Ser-349 is subject to Phosphoserine. Position 466 is a phosphoserine; by CaMK4 and SIK1 (Ser-466). 3 disordered regions span residues 508-530 (SKPSEPPRQPESHPEETEEELRE), 542-582 (RLPG…RPAT), and 623-646 (RPLSRAQSSPASATFPMSVQEPPT). Residues 515–530 (RQPESHPEETEEELRE) show a composition bias toward basic and acidic residues. Lys-557 participates in a covalent cross-link: Glycyl lysine isopeptide (Lys-Gly) (interchain with G-Cter in SUMO). Phosphoserine occurs at positions 563, 630, and 631. Polar residues predominate over residues 627–639 (RAQSSPASATFPM). The interval 653-1077 (GLVYDTLMLK…EEPMEEEPPL (425 aa)) is histone deacetylase. Zn(2+) is bound by residues Cys-665, Cys-667, His-673, and Cys-744. The active site involves His-796. Positions 1044–1077 (EEAETVTAMASLSVGVKPAEKRSEEEPMEEEPPL) match the Nuclear export signal motif. Residues 1052–1077 (MASLSVGVKPAEKRSEEEPMEEEPPL) form a disordered region.

This sequence belongs to the histone deacetylase family. HD type 2 subfamily. Homodimer. Homodimerization via its N-terminal domain. Interacts with HDAC7. Interacts with MEF2A, MEF2C, MEF2D, MORC2 and NR2C1. Interacts with a 14-3-3 chaperone proteins in a phosphorylation dependent manner. Interacts with 14-3-3 protein YWHAB. Interacts with KDM5B and AHRR. Interacts with BTBD14B. Interacts with MYOCD. Interacts (via PxLPxI/L motif) with ANKRA2 (via ankyrin repeats). Interacts with CUL7 (as part of the 3M complex); negatively regulated by ANKRA2. Interacts with EP300 in the presence of TFAP2C. Interacts with HSPA1A and HSPA1B leading to their deacetylation at 'Lys-77'. Interacts with ZBTB7B; the interaction allows the recruitment of HDAC4 on CD8 loci for deacetylation and possible inhibition of CD8 genes expression. Interacts with DHX36. Interacts with SIK3; this interaction leads to HDAC4 retention in the cytoplasm. In terms of processing, phosphorylated by CaMK4 at Ser-245, Ser-466 and Ser-630. Phosphorylation at other residues by CaMK2D is required for the interaction with 14-3-3. Phosphorylation at Ser-349, within the PxLPxI/L motif, impairs the binding of ANKRA2 but generates a high-affinity docking site for 14-3-3. Sumoylation on Lys-557 is promoted by the E3 SUMO-protein ligase RANBP2, and prevented by phosphorylation by CaMK4.

The protein resides in the nucleus. It is found in the cytoplasm. The catalysed reaction is N(6)-acetyl-L-lysyl-[histone] + H2O = L-lysyl-[histone] + acetate. Responsible for the deacetylation of lysine residues on the N-terminal part of the core histones (H2A, H2B, H3 and H4). Histone deacetylation gives a tag for epigenetic repression and plays an important role in transcriptional regulation, cell cycle progression and developmental events. Histone deacetylases act via the formation of large multiprotein complexes. Involved in muscle maturation via its interaction with the myocyte enhancer factors such as MEF2A, MEF2C and MEF2D. Deacetylates HSPA1A and HSPA1B at 'Lys-77' leading to their preferential binding to co-chaperone STUB1. The chain is Histone deacetylase 4 (Hdac4) from Rattus norvegicus (Rat).